Reading from the N-terminus, the 490-residue chain is Glutamate--tRNA ligase (490 aa).

Residues 12–22 (PSPTGTPHVGL) carry the 'HIGH' region motif. The short motif at 256-260 (KLSKR) is the 'KMSKS' region element. K259 serves as a coordination point for ATP.

The protein belongs to the class-I aminoacyl-tRNA synthetase family. Glutamate--tRNA ligase type 1 subfamily. Monomer.

The protein localises to the cytoplasm. The enzyme catalyses tRNA(Glu) + L-glutamate + ATP = L-glutamyl-tRNA(Glu) + AMP + diphosphate. In terms of biological role, catalyzes the attachment of glutamate to tRNA(Glu) in a two-step reaction: glutamate is first activated by ATP to form Glu-AMP and then transferred to the acceptor end of tRNA(Glu). The chain is Glutamate--tRNA ligase from Mycobacterium sp. (strain KMS).